The primary structure comprises 60 residues: Large ribosomal subunit protein uL30 (60 aa).

The protein belongs to the universal ribosomal protein uL30 family. In terms of assembly, part of the 50S ribosomal subunit.

In Albidiferax ferrireducens (strain ATCC BAA-621 / DSM 15236 / T118) (Rhodoferax ferrireducens), this protein is Large ribosomal subunit protein uL30.